Reading from the N-terminus, the 197-residue chain is Glycerol-3-phosphate acyltransferase (197 aa).

The next 4 helical transmembrane spans lie at 1-21, 69-89, 110-130, and 152-172; these read MTALILLLAYLLGSIPFGLLV, LPMLFSVPVHPLLAGAIAVVG, VMLFYSPLFFLSLIAVFLVVL, and VFFTDDIPLTVAVLLLASFIF.

Belongs to the PlsY family. As to quaternary structure, probably interacts with PlsX.

Its subcellular location is the cell membrane. It catalyses the reaction an acyl phosphate + sn-glycerol 3-phosphate = a 1-acyl-sn-glycero-3-phosphate + phosphate. It participates in lipid metabolism; phospholipid metabolism. Its function is as follows. Catalyzes the transfer of an acyl group from acyl-phosphate (acyl-PO(4)) to glycerol-3-phosphate (G3P) to form lysophosphatidic acid (LPA). This enzyme utilizes acyl-phosphate as fatty acyl donor, but not acyl-CoA or acyl-ACP. The protein is Glycerol-3-phosphate acyltransferase of Geobacillus kaustophilus (strain HTA426).